The following is an 89-amino-acid chain: Small ribosomal subunit protein uS14 (89 aa).

It belongs to the universal ribosomal protein uS14 family. Part of the 30S ribosomal subunit. Contacts proteins S3 and S10.

In terms of biological role, binds 16S rRNA, required for the assembly of 30S particles and may also be responsible for determining the conformation of the 16S rRNA at the A site. The polypeptide is Small ribosomal subunit protein uS14 (Chloroherpeton thalassium (strain ATCC 35110 / GB-78)).